We begin with the raw amino-acid sequence, 519 residues long: Golgi-associated kinase 1B (519 aa).

The Cytoplasmic segment spans residues 1–37; the sequence is MTCPDKPGQLINWFICSLCVPRVRKLWSSRRPRTRRN. A helical; Signal-anchor for type II membrane protein transmembrane segment spans residues 38 to 55; it reads LLLGTACAIYLGFLVSQV. Topologically, residues 56 to 519 are extracellular; it reads GRASLQHGQA…HGVKVLPMNE (464 aa). Positions 62–103 are disordered; sequence HGQAAEKGPHRSRDTAEPSFPEIPLDGTLAPPESQGNGSTLQ. The span at 68-77 shows a compositional bias: basic and acidic residues; it reads KGPHRSRDTA. N-linked (GlcNAc...) asparagine glycosylation is present at Asn289.

Belongs to the GASK family.

It is found in the golgi apparatus membrane. The protein is Golgi-associated kinase 1B of Homo sapiens (Human).